Consider the following 54-residue polypeptide: VATVDCSEYPKPVCSLEYMPLCGSDSQTYSNECNFCNAVVDSNGTLTLSHFGKC.

The 51-residue stretch at 4 to 54 (VDCSEYPKPVCSLEYMPLCGSDSQTYSNECNFCNAVVDSNGTLTLSHFGKC) folds into the Kazal-like domain. Cystine bridges form between Cys6/Cys36, Cys14/Cys33, and Cys22/Cys54. N-linked (GlcNAc...) asparagine glycosylation occurs at Asn43.

The protein localises to the secreted. This chain is Ovomucoid, found in Caracara plancus (Southern caracara).